The sequence spans 156 residues: Small ribosomal subunit protein uS7 (156 aa).

It belongs to the universal ribosomal protein uS7 family. As to quaternary structure, part of the 30S ribosomal subunit. Contacts proteins S9 and S11.

One of the primary rRNA binding proteins, it binds directly to 16S rRNA where it nucleates assembly of the head domain of the 30S subunit. Is located at the subunit interface close to the decoding center, probably blocks exit of the E-site tRNA. The protein is Small ribosomal subunit protein uS7 of Mycobacterium sp. (strain JLS).